The sequence spans 74 residues: Small ribosomal subunit protein bS20c (74 aa).

The protein belongs to the bacterial ribosomal protein bS20 family.

The protein resides in the plastid. It localises to the chloroplast. In terms of biological role, binds directly to 16S ribosomal RNA. The protein is Small ribosomal subunit protein bS20c of Cyanidioschyzon merolae (strain NIES-3377 / 10D) (Unicellular red alga).